A 411-amino-acid chain; its full sequence is Protrudin (411 aa).

The tract at residues 1-27 is disordered; the sequence is MQTSEREGSGPELSPSVMPEAPLESPP. The Cytoplasmic portion of the chain corresponds to 1–66; that stretch reads MQTSEREGSG…AGDGVRYLLR (66 aa). A sufficient for homooligomerization region spans residues 1 to 92; the sequence is MQTSEREGSG…LFLTLNEGAW (92 aa). The sufficient for localization to endoplasmic reticulum tubular network and for interactions with REEP1, REEP5, ATL1, ATL2, ATL3 and SPAST stretch occupies residues 1 to 205; it reads MQTSEREGSG…LYLLPLCWVL (205 aa). Residues 51–64 are necessary for interaction with RAB11A and function in neurite outgrowth; that stretch reads LEPLKDAGDGVRYL. Residues 67–87 traverse the membrane as a helical segment; sequence WQMPLCSLLTCLGLNVLFLTL. Position 88 (Asn-88) is a topological domain, lumenal. A helical membrane pass occupies residues 89 to 109; it reads EGAWYSVGALMISVPALLGYL. Residues 110-187 are Cytoplasmic-facing; it reads QEVCRARLPE…NPVVSSQFYG (78 aa). An intramembrane region (helical) is located at residues 188–208; that stretch reads ALLGTICMLYLLPLCWVLTLL. The Cytoplasmic segment spans residues 209-411; it reads NSTLFLGNVE…CASCNQTLSK (203 aa). The interval 234-286 is disordered; the sequence is MNPKQEEHAFESPPPPDVGGKGGLMDSTPALTPTEDLTPGSVEEAEEAEPDEE. The interval 271–361 is necessary for interaction with KIF5A; sequence TPGSVEEAEE…GCSATFSVLK (91 aa). Positions 276 to 286 are enriched in acidic residues; it reads EEAEEAEPDEE. Positions 286-292 are necessary for interaction with VAPA; that stretch reads EFKDAIE. The FYVE-type zinc finger occupies 344–410; the sequence is TNNFGNCTGC…VCASCNQTLS (67 aa). Positions 350, 353, 366, 369, 374, 377, 402, and 405 each coordinate Zn(2+).

In terms of assembly, can form homooligomers (monomers, dimers and tetramers). Interacts with RAB11A (GDP-bound form); regulates RAB11A. Interacts with FKBP8; may negatively regulate ZFYVE27 phosphorylation. Interacts with VAPA (via MSP domain); may regulate ZFYVE27 retention in the endoplasmic reticulum and its function in cell projections formation. Interacts with VAPB (via MSP domain). Interacts with RAB11B (GDP-bound form), REEP1, REEP5, ATL1, ATL2, ATL3, SPAST, SURF4, KIF5A, KIF5B, KIF5C and RTN3. Phosphorylated. Phosphorylation is induced by NGF through the MAPK/ERK pathway and modulates interaction with RAB11A.

The protein resides in the recycling endosome membrane. Its subcellular location is the endoplasmic reticulum membrane. The protein localises to the cell projection. It is found in the growth cone membrane. Functionally, key regulator of RAB11-dependent vesicular trafficking during neurite extension through polarized membrane transport. Promotes axonal elongation and contributes to the establishment of neuronal cell polarity. Involved in nerve growth factor-induced neurite formation in VAPA-dependent manner. Contributes to both the formation and stabilization of the tubular ER network. Involved in ER morphogenesis by regulating the sheet-to-tubule balance and possibly the density of tubule interconnections. Acts as an adapter protein that facilitates the interaction of KIF5A with VAPA, VAPB, SURF4, RAB11A, RAB11B and RTN3 and the ZFYVE27-KIF5A complex contributes to the transport of these proteins in neurons. Can induce formation of neurite-like membrane protrusions in non-neuronal cells in a KIF5A/B-dependent manner. This chain is Protrudin (ZFYVE27), found in Pongo abelii (Sumatran orangutan).